Here is a 552-residue protein sequence, read N- to C-terminus: Urocanate hydratase (552 aa).

NAD(+) is bound by residues 49-50 (GG), Gln127, 173-175 (GMG), Asp193, 239-240 (NA), 260-264 (QTSAH), 270-271 (YV), and Tyr319. The active site involves Cys407. Gly489 provides a ligand contact to NAD(+).

This sequence belongs to the urocanase family. It depends on NAD(+) as a cofactor.

The protein localises to the cytoplasm. The catalysed reaction is 4-imidazolone-5-propanoate = trans-urocanate + H2O. Its pathway is amino-acid degradation; L-histidine degradation into L-glutamate; N-formimidoyl-L-glutamate from L-histidine: step 2/3. Catalyzes the conversion of urocanate to 4-imidazolone-5-propionate. The protein is Urocanate hydratase of Bacillus cytotoxicus (strain DSM 22905 / CIP 110041 / 391-98 / NVH 391-98).